The chain runs to 253 residues: 3-dehydroquinate dehydratase (253 aa).

3-dehydroquinate is bound by residues 46-48 (EWR) and Arg82. Catalysis depends on His143, which acts as the Proton donor/acceptor. The active-site Schiff-base intermediate with substrate is the Lys170. Residues Arg213, Ser232, and Gln236 each coordinate 3-dehydroquinate.

Belongs to the type-I 3-dehydroquinase family. Homodimer.

The enzyme catalyses 3-dehydroquinate = 3-dehydroshikimate + H2O. It participates in metabolic intermediate biosynthesis; chorismate biosynthesis; chorismate from D-erythrose 4-phosphate and phosphoenolpyruvate: step 3/7. In terms of biological role, involved in the third step of the chorismate pathway, which leads to the biosynthesis of aromatic amino acids. Catalyzes the cis-dehydration of 3-dehydroquinate (DHQ) and introduces the first double bond of the aromatic ring to yield 3-dehydroshikimate. The polypeptide is 3-dehydroquinate dehydratase (Syntrophotalea carbinolica (strain DSM 2380 / NBRC 103641 / GraBd1) (Pelobacter carbinolicus)).